The chain runs to 236 residues: Eukaryotic translation initiation factor 3 subunit J (236 aa).

The interval 1-88 is disordered; that stretch reads MADDWESAAD…EAEAQRVASL (88 aa). The span at 28 to 46 shows a compositional bias: acidic residues; sequence GEDEDEDIKDSWEDEEEKK. Basic and acidic residues-rich tracts occupy residues 47 to 58 and 68 to 77; these read DEEKPTKTEAPA and AKLEQQARLE.

Belongs to the eIF-3 subunit J family. Component of the eukaryotic translation initiation factor 3 (eIF-3) complex. The eIF-3 complex interacts with pix.

It is found in the cytoplasm. Functionally, component of the eukaryotic translation initiation factor 3 (eIF-3) complex, which is involved in protein synthesis of a specialized repertoire of mRNAs and, together with other initiation factors, stimulates binding of mRNA and methionyl-tRNAi to the 40S ribosome. The eIF-3 complex specifically targets and initiates translation of a subset of mRNAs involved in cell proliferation. The sequence is that of Eukaryotic translation initiation factor 3 subunit J from Drosophila erecta (Fruit fly).